We begin with the raw amino-acid sequence, 235 residues long: Leucyl/phenylalanyl-tRNA--protein transferase (235 aa).

It belongs to the L/F-transferase family.

It is found in the cytoplasm. The catalysed reaction is N-terminal L-lysyl-[protein] + L-leucyl-tRNA(Leu) = N-terminal L-leucyl-L-lysyl-[protein] + tRNA(Leu) + H(+). It catalyses the reaction N-terminal L-arginyl-[protein] + L-leucyl-tRNA(Leu) = N-terminal L-leucyl-L-arginyl-[protein] + tRNA(Leu) + H(+). It carries out the reaction L-phenylalanyl-tRNA(Phe) + an N-terminal L-alpha-aminoacyl-[protein] = an N-terminal L-phenylalanyl-L-alpha-aminoacyl-[protein] + tRNA(Phe). Its function is as follows. Functions in the N-end rule pathway of protein degradation where it conjugates Leu, Phe and, less efficiently, Met from aminoacyl-tRNAs to the N-termini of proteins containing an N-terminal arginine or lysine. The polypeptide is Leucyl/phenylalanyl-tRNA--protein transferase (Methylococcus capsulatus (strain ATCC 33009 / NCIMB 11132 / Bath)).